Consider the following 225-residue polypeptide: MMNSIFGKRKTPAELLRENKRMLDKSIREIERERQGLQTQEKKLINEIKKTAKQGQMGAVKVMAKDLIRTRHQIEKFYKLKSQLQGVSLRIQTLKSTQAMGEAMKGVTKAMGQMNRQMNLPSLQKIMQEFERQNEKMEMVSEVMGDAIDDALEGDEEEEETEDLVSQVLDEIGIDINQELVNAPSGAVAVPAAKNKVVQAEATGAEDSGGIDSDLQARLDNLRKM.

The stretch at 13-54 (AELLRENKRMLDKSIREIERERQGLQTQEKKLINEIKKTAKQ) forms a coiled coil.

Belongs to the SNF7 family. As to quaternary structure, component of the endosomal sorting required for transport complex III (ESCRT-III), composed at least of VPS2, VPS20, VPS24 and VPS32. Interacts with SKD1.

It localises to the endosome. Functionally, component of the ESCRT-III complex, which is required for multivesicular bodies (MVBs) formation and sorting of endosomal cargo proteins into MVBs. The ESCRT-III complex is probably involved in the concentration of MVB cargo. This chain is Vacuolar protein sorting-associated protein 2 homolog 1 (VPS2.1), found in Arabidopsis thaliana (Mouse-ear cress).